Here is a 48-residue protein sequence, read N- to C-terminus: Sperm protamine R3 isoform 1 (48 aa).

The span at 1-29 shows a compositional bias: basic residues; it reads ARRRHSMKKKRKSVRRRKTRKNQRKRKNS. The interval 1–48 is disordered; it reads ARRRHSMKKKRKSVRRRKTRKNQRKRKNSLGRSFKQHGFLKQPPRFRP.

Testis.

Its subcellular location is the nucleus. The protein resides in the chromosome. Protamines substitute for histones in the chromatin of sperm during the haploid phase of spermatogenesis. They compact sperm DNA into a highly condensed, stable and inactive complex. This Hydrolagus colliei (Spotted ratfish) protein is Sperm protamine R3 isoform 1.